Reading from the N-terminus, the 86-residue chain is Large ribosomal subunit protein bL31 (86 aa).

Positions 65–86 are disordered; sequence YGMGSADSATSKETKESKKSDK. Positions 74–86 are enriched in basic and acidic residues; sequence TSKETKESKKSDK.

Belongs to the bacterial ribosomal protein bL31 family. Type A subfamily. In terms of assembly, part of the 50S ribosomal subunit.

In terms of biological role, binds the 23S rRNA. This chain is Large ribosomal subunit protein bL31, found in Prochlorococcus marinus subsp. pastoris (strain CCMP1986 / NIES-2087 / MED4).